The following is a 638-amino-acid chain: Phosphomethylpyrimidine synthase (638 aa).

Substrate contacts are provided by residues N243, M272, Y301, H337, 357–359 (SRG), 398–401 (DGLR), and E437. H441 lines the Zn(2+) pocket. Y464 is a binding site for substrate. H505 provides a ligand contact to Zn(2+). Residues C585, C588, and C593 each contribute to the [4Fe-4S] cluster site.

It belongs to the ThiC family. As to quaternary structure, homodimer. It depends on [4Fe-4S] cluster as a cofactor.

The enzyme catalyses 5-amino-1-(5-phospho-beta-D-ribosyl)imidazole + S-adenosyl-L-methionine = 4-amino-2-methyl-5-(phosphooxymethyl)pyrimidine + CO + 5'-deoxyadenosine + formate + L-methionine + 3 H(+). Its pathway is cofactor biosynthesis; thiamine diphosphate biosynthesis. Functionally, catalyzes the synthesis of the hydroxymethylpyrimidine phosphate (HMP-P) moiety of thiamine from aminoimidazole ribotide (AIR) in a radical S-adenosyl-L-methionine (SAM)-dependent reaction. The polypeptide is Phosphomethylpyrimidine synthase (Azoarcus sp. (strain BH72)).